The sequence spans 310 residues: Glutamyl-Q tRNA(Asp) synthetase (310 aa).

Residues R8–S12 and E44 each bind L-glutamate. The 'HIGH' region signature appears at P11–S21. Zn(2+) contacts are provided by C100, C102, Y123, and C127. 2 residues coordinate L-glutamate: Y183 and R201. The short motif at K239–Q243 is the 'KMSKS' region element. Residue K242 coordinates ATP.

It belongs to the class-I aminoacyl-tRNA synthetase family. GluQ subfamily. Zn(2+) serves as cofactor.

In terms of biological role, catalyzes the tRNA-independent activation of glutamate in presence of ATP and the subsequent transfer of glutamate onto a tRNA(Asp). Glutamate is transferred on the 2-amino-5-(4,5-dihydroxy-2-cyclopenten-1-yl) moiety of the queuosine in the wobble position of the QUC anticodon. In Cupriavidus metallidurans (strain ATCC 43123 / DSM 2839 / NBRC 102507 / CH34) (Ralstonia metallidurans), this protein is Glutamyl-Q tRNA(Asp) synthetase.